A 970-amino-acid polypeptide reads, in one-letter code: Disease resistance protein RGA2 (970 aa).

In terms of domain architecture, NB-ARC spans 135 to 438 (RQAVRRETGS…MAHGFLLSKG (304 aa)). 182-189 (GMGGLGKT) contributes to the ATP binding site. LRR repeat units follow at residues 525–548 (FISL…IGDL), 550–571 (HLRY…LCKL), 573–594 (NLQT…ETSK), 595–619 (LGSL…IGSL), 638–662 (LGEL…KNDK), 672–697 (KGNL…EVKV), 752–777 (LPCL…DIDV), 787–811 (FPSL…EGEE), 813–832 (FPVL…LSSN), 833–857 (LRAL…MFKN), 859–882 (ANLK…LASL), 884–906 (ALKS…GLEG), 907–931 (LSSL…LQHL), and 946–970 (IKRC…NIYI).

This sequence belongs to the disease resistance NB-LRR family.

Functionally, disease resistance protein. Resistance proteins guard the plant against pathogens that contain an appropriate avirulence protein via a direct or indirect interaction with this avirulence protein. That triggers a defense system which restricts the pathogen growth. Confers a broad resistance to all known races of P.infestans. This chain is Disease resistance protein RGA2 (RGA2), found in Solanum bulbocastanum (Wild potato).